Consider the following 370-residue polypeptide: tRNA-specific 2-thiouridylase MnmA 1 (370 aa).

ATP-binding positions include 9 to 16 (GMSGGVDS) and Met-35. Residues 95 to 97 (NPD) are interaction with target base in tRNA. The active-site Nucleophile is the Cys-100. Cysteines 100 and 196 form a disulfide. An ATP-binding site is contributed by Gly-124. Positions 146–148 (KDQ) are interaction with tRNA. The active-site Cysteine persulfide intermediate is the Cys-196. The interval 306 to 307 (RY) is interaction with tRNA.

Belongs to the MnmA/TRMU family.

The protein localises to the cytoplasm. The catalysed reaction is S-sulfanyl-L-cysteinyl-[protein] + uridine(34) in tRNA + AH2 + ATP = 2-thiouridine(34) in tRNA + L-cysteinyl-[protein] + A + AMP + diphosphate + H(+). In terms of biological role, catalyzes the 2-thiolation of uridine at the wobble position (U34) of tRNA, leading to the formation of s(2)U34. The polypeptide is tRNA-specific 2-thiouridylase MnmA 1 (Geobacillus kaustophilus (strain HTA426)).